A 147-amino-acid polypeptide reads, in one-letter code: 3-dehydroquinate dehydratase (147 aa).

Tyrosine 24 serves as the catalytic Proton acceptor. Substrate is bound by residues asparagine 75, histidine 81, and aspartate 88. Histidine 101 acts as the Proton donor in catalysis. Residues 102–103 (LS) and arginine 112 each bind substrate.

It belongs to the type-II 3-dehydroquinase family. In terms of assembly, homododecamer.

It catalyses the reaction 3-dehydroquinate = 3-dehydroshikimate + H2O. It participates in metabolic intermediate biosynthesis; chorismate biosynthesis; chorismate from D-erythrose 4-phosphate and phosphoenolpyruvate: step 3/7. Catalyzes a trans-dehydration via an enolate intermediate. This chain is 3-dehydroquinate dehydratase, found in Caulobacter sp. (strain K31).